A 402-amino-acid polypeptide reads, in one-letter code: MSKTPLTAKAIDAAQPQDKPYKLTDSLTPGLFLLVHPNGSKYWRFRYWLNKREFLQAIGVYPLITLKEARRRATESRSLIANGINPVEQARKEKAIDALNMAAGFKKVAEDWFATRVGGWSESYAKQVRSALEKDVYPVLGKRSIVDITARDVLALLQKKERTAPEQARKLRRRIGEIFKFAVITELVTRNPVADLDTALKARRPGHNAWIPISEIPAFYKALERAGSVQIQTAIRLLILTALRTAELRLCRWEWINLEDATITLPAEVMKARRPHVVPLSRQAVELLQDQFTRSGYSAFVFPGRFMDKPLSASAILKALERIGYKSIATGHGWRTTFSTALNESGRYSPDWIEIQLAHVPKGIRGVYNQAAYLKQRRAMMQDYADAIDSILAGNGNPLEPE.

The Core-binding (CB) domain occupies 103–183; the sequence is AGFKKVAEDW…RIGEIFKFAV (81 aa). The Tyr recombinase domain maps to 206–381; that stretch reads GHNAWIPISE…AYLKQRRAMM (176 aa). Catalysis depends on residues R244, K271, H332, R335, and H359. Y368 functions as the O-(3'-phospho-DNA)-tyrosine intermediate in the catalytic mechanism.

The protein belongs to the 'phage' integrase family.

Integrase is necessary for integration of the phage into the host genome by site-specific recombination. In conjunction with excisionase, integrase is also necessary for excision of the prophage from the host genome. The chain is Prophage integrase IntZ (intZ) from Escherichia coli (strain K12).